An 888-amino-acid chain; its full sequence is Alanine--tRNA ligase (888 aa).

Zn(2+) is bound by residues histidine 571, histidine 575, cysteine 674, and histidine 678.

The protein belongs to the class-II aminoacyl-tRNA synthetase family. Requires Zn(2+) as cofactor.

It localises to the cytoplasm. It carries out the reaction tRNA(Ala) + L-alanine + ATP = L-alanyl-tRNA(Ala) + AMP + diphosphate. Functionally, catalyzes the attachment of alanine to tRNA(Ala) in a two-step reaction: alanine is first activated by ATP to form Ala-AMP and then transferred to the acceptor end of tRNA(Ala). Also edits incorrectly charged Ser-tRNA(Ala) and Gly-tRNA(Ala) via its editing domain. In Nocardia farcinica (strain IFM 10152), this protein is Alanine--tRNA ligase.